A 473-amino-acid chain; its full sequence is Ribulose bisphosphate carboxylase large chain (473 aa).

Residues 1–2 (MS) constitute a propeptide that is removed on maturation. Pro3 is modified (N-acetylproline). Lys14 is modified (N6,N6,N6-trimethyllysine). Substrate-binding residues include Asn123 and Thr173. The active-site Proton acceptor is Lys175. Lys177 lines the substrate pocket. Mg(2+)-binding residues include Lys201, Asp203, and Glu204. Lys201 bears the N6-carboxylysine mark. Catalysis depends on His294, which acts as the Proton acceptor. Positions 295, 327, and 379 each coordinate substrate.

It belongs to the RuBisCO large chain family. Type I subfamily. As to quaternary structure, heterohexadecamer of 8 large chains and 8 small chains; disulfide-linked. The disulfide link is formed within the large subunit homodimers. Mg(2+) is required as a cofactor. The disulfide bond which can form in the large chain dimeric partners within the hexadecamer appears to be associated with oxidative stress and protein turnover.

It localises to the plastid. It is found in the chloroplast. It catalyses the reaction 2 (2R)-3-phosphoglycerate + 2 H(+) = D-ribulose 1,5-bisphosphate + CO2 + H2O. The enzyme catalyses D-ribulose 1,5-bisphosphate + O2 = 2-phosphoglycolate + (2R)-3-phosphoglycerate + 2 H(+). RuBisCO catalyzes two reactions: the carboxylation of D-ribulose 1,5-bisphosphate, the primary event in carbon dioxide fixation, as well as the oxidative fragmentation of the pentose substrate in the photorespiration process. Both reactions occur simultaneously and in competition at the same active site. The sequence is that of Ribulose bisphosphate carboxylase large chain from Ajuga chamaepitys (Yellow bugle).